The chain runs to 69 residues: Probable molybdenum-pterin-binding protein (69 aa).

The 67-residue stretch at lysine 2 to valine 68 folds into the Mop domain.

The protein to C.pasteurianum MOP proteins.

In terms of biological role, binds one mole of molybdenum per mole of protein and contains a pterin. The sequence is that of Probable molybdenum-pterin-binding protein from Haemophilus influenzae (strain ATCC 51907 / DSM 11121 / KW20 / Rd).